Reading from the N-terminus, the 733-residue chain is Polyribonucleotide nucleotidyltransferase (733 aa).

The Mg(2+) site is built by D503 and D509. Residues 570 to 629 form the KH domain; the sequence is PRLTTIQIPVDAIGMVIGKGGETIRSITEETGAEINIDDDGTVTIACSSPEATKAAVETI. The 75-residue stretch at 639-713 folds into the S1 motif domain; that stretch reads GTIYMGKVRD…GKTKFALSIK (75 aa).

This sequence belongs to the polyribonucleotide nucleotidyltransferase family. The cofactor is Mg(2+).

It localises to the cytoplasm. The enzyme catalyses RNA(n+1) + phosphate = RNA(n) + a ribonucleoside 5'-diphosphate. Functionally, involved in mRNA degradation. Catalyzes the phosphorolysis of single-stranded polyribonucleotides processively in the 3'- to 5'-direction. The chain is Polyribonucleotide nucleotidyltransferase from Chlorobaculum tepidum (strain ATCC 49652 / DSM 12025 / NBRC 103806 / TLS) (Chlorobium tepidum).